A 260-amino-acid chain; its full sequence is MFDIGVNLTSSQFEKDREQVVIRAKQAGVSGILITGTNAQESQQAMLLAQAYPDYCWSTAGVHPHDASQWNDAVAEQIHHMASADCVVAIGECGLDFNRNFSTPEEQERAFSAQLAIAAERSMPVFLHCRDAHSRFISFLTPWLNRLPAAVVHCFTGNRHELDECLAAGLMVGITGWVCDERRGLELRALLPHIPADRLLVETDAPYLLPRDLRPKPASRRNEPCYLPHIIRQIAEWRGEDATWLGQTTDENARRVFRLA.

A divalent metal cation is bound by residues Glu-92, His-128, and His-153.

The protein belongs to the metallo-dependent hydrolases superfamily. TatD-type hydrolase family. TatD subfamily. In terms of assembly, monomer. The cofactor is Mg(2+).

Its subcellular location is the cytoplasm. In terms of biological role, 3'-5' exonuclease that prefers single-stranded DNA and RNA. May play a role in the H(2)O(2)-induced DNA damage repair. The polypeptide is 3'-5' ssDNA/RNA exonuclease TatD (Pectobacterium carotovorum subsp. carotovorum (strain PC1)).